The chain runs to 180 residues: Hypoxanthine-guanine phosphoribosyltransferase (180 aa).

GMP is bound by residues K40, 99-107 (EDIVDSGLT), K131, and D159. D103 functions as the Proton acceptor in the catalytic mechanism. Residue D159 coordinates Mg(2+).

It belongs to the purine/pyrimidine phosphoribosyltransferase family. It depends on Mg(2+) as a cofactor.

The protein localises to the cytoplasm. It catalyses the reaction IMP + diphosphate = hypoxanthine + 5-phospho-alpha-D-ribose 1-diphosphate. It carries out the reaction GMP + diphosphate = guanine + 5-phospho-alpha-D-ribose 1-diphosphate. It participates in purine metabolism; IMP biosynthesis via salvage pathway; IMP from hypoxanthine: step 1/1. Functionally, converts guanine to guanosine monophosphate, and hypoxanthine to inosine monophosphate. Transfers the 5-phosphoribosyl group from 5-phosphoribosylpyrophosphate onto the purine. Plays a central role in the generation of purine nucleotides through the purine salvage pathway. The sequence is that of Hypoxanthine-guanine phosphoribosyltransferase (hprT) from Dictyostelium discoideum (Social amoeba).